A 454-amino-acid polypeptide reads, in one-letter code: MSELFSERIPPQSIEAEQAVLGAVFLDPAALVPASEILIPEDFYRAAHQKIFHAMLRVADRGEPVDLVTVTAELAASEQLEEIGGVSYLSELADAVPTAANVEYYARIVEEKSVLRRLIRTATSIAQDGYTREDEIDVLLDEADRKIMEVSQRKHSGAFKNIKDILVQTYDNIEMLHNRDGEITGIPTGFTELDRMTSGFQRSDLIIVAARPSVGKTAFALNIAQNVATKTNENVAIFSLEMSAQQLVMRMLCAEGNINAQNLRTGKLTPEDWGKLTMAMGSLSNAGIYIDDTPSIRVSDIRAKCRRLKQESGLGMIVIDYLQLIQGSGRSKENRQQEVSEISRSLKALARELEVPVIALSQLSRSVEQRQDKRPMMSDIRESGSIEQDADIVAFLYRDDYYNKDSENKNIIEIIIAKQRNGPVGTVQLAFIKEYNKFVNLERRFDEAQIPPGA.

The tract at residues 1 to 149 (MSELFSERIP…LDEADRKIME (149 aa)) is N-terminal domain (NTD). The interval 163-176 (KDILVQTYDNIEML) is linker helix. The SF4 helicase domain maps to 179 to 445 (RDGEITGIPT…NKFVNLERRF (267 aa)). The C-terminal domain (CTD) stretch occupies residues 183-454 (ITGIPTGFTE…FDEAQIPPGA (272 aa)). ATP contacts are provided by Ser-213, Gly-215, Lys-216, Thr-217, and Ala-218. Glu-241 functions as the Nucleophile in the catalytic mechanism. Arg-250 and Gln-362 together coordinate ATP. SsDNA-binding residues include Arg-381, Glu-382, and Gly-384. Positions 418, 419, and 420 each coordinate ATP.

It belongs to the helicase family. DnaB subfamily. Homohexamer. Interacts with DnaG primase, as DnaB(6):DnaG(3). Interacts with the N-terminus of DnaI (shown with DnaI of B.subtilis), forms a helicase DnaB(6):DnaI(6) complex. The DnaB-DnaI complex is disrupted by DnaD (DnaD and DnaI from B.subtilis). A stable complex DnaI(6):DnaB(6):DnaG(3) fragment can be isolated; DnaI and DnaG do not contact each other (DnaI in this complex is derived from B.subtilis). Forms a complex with DNA clamp loader protein tau (shown with B.subtilis HolA) tau(3):DnaB(6); a single ATP hydrolysis even is sufficient for complex formation.

It carries out the reaction Couples ATP hydrolysis with the unwinding of duplex DNA at the replication fork by translocating in the 5'-3' direction. This creates two antiparallel DNA single strands (ssDNA). The leading ssDNA polymer is the template for DNA polymerase III holoenzyme which synthesizes a continuous strand.. It catalyses the reaction ATP + H2O = ADP + phosphate + H(+). Its function is as follows. The main replicative DNA helicase, it participates in initiation and elongation during chromosome replication. Travels ahead of the DNA replisome, separating double-stranded (ds)DNA into templates for DNA synthesis. Binding of single-stranded (ss)DNA to the hexamer suggests a 2-nucleotide step size for the helicase and a hand-over-hand mechanism of DNA unwinding. Has ssDNA-stimulated ATPase activity. DnaG primase stimulates the helicase activity (the helicase direction was not determine but is probably 5'-3'). Loaded onto DNA by helicase loader DnaI (shown with DnaI of B.subtilis); ATP-binding enhances loading and subsequent ATP hydrolysis dissociates the complex, leaving helicase on the DNA. Binds ssDNA and less well dsDNA, in the presence of ADPNP (probably 5'-adenylyl beta, gamma-imidodiphosphate, but not ATP) binding to both DNAs is improved. This chain is Replicative DNA helicase DnaB, found in Geobacillus stearothermophilus (Bacillus stearothermophilus).